The sequence spans 1252 residues: ABC transporter B family member 19 (1252 aa).

N-linked (GlcNAc...) asparagine glycosylation occurs at asparagine 5. The ABC transmembrane type-1 1 domain occupies 41-330; it reads MFVGSLGAIV…SFSNLGAFSK (290 aa). The next 2 membrane-spanning stretches (helical) occupy residues 42–62 and 88–108; these read FVGS…FLLF and LYFV…IACW. Residue aspartate 136 participates in ATP binding. 4 consecutive transmembrane segments (helical) span residues 163–183, 187–207, 274–294, and 308–328; these read VGNF…GFVS, LALL…LYAY, CTYG…GVFI, and IFSA…LGAF. Brassinolide contacts are provided by tyrosine 276 and tryptophan 283. The ABC transporter 1 domain maps to 365–601; sequence IEFKDVTFSY…SGAYASLIRF (237 aa). The ATP site is built by tyrosine 374, serine 376, glycine 405, lysine 406, serine 407, threonine 408, and glutamate 529. N-linked (GlcNAc...) asparagine glycosylation occurs at asparagine 641. The ABC transmembrane type-1 2 domain occupies 687–975; that stretch reads SIMGAVGSIL…TVSLAPEIIR (289 aa). Transmembrane regions (helical) follow at residues 688–708 and 732–752; these read IMGA…AIVM and FIYI…HYFF. N-linked (GlcNAc...) asparagine glycosylation occurs at asparagine 758. Residue aspartate 780 coordinates ATP. N-linked (GlcNAc...) asparagine glycosylation is found at asparagine 785 and asparagine 814. 3 helical membrane passes run 822–842, 914–934, and 949–969; these read FIVA…TFPL, GFLF…ILWY, and VIKV…TVSL. The interval 965-1252 is interaction with FKBP42/TWD1; that stretch reads ETVSLAPEII…RLLQLQTHRI (288 aa). Positions 1010–1246 constitute an ABC transporter 2 domain; the sequence is IEFRHVDFAY…PEGAYSRLLQ (237 aa). ATP-binding residues include tyrosine 1019, serine 1021, arginine 1022, lysine 1051, serine 1052, and serine 1053.

It belongs to the ABC transporter superfamily. ABCB family. Multidrug resistance exporter (TC 3.A.1.201) subfamily. As to quaternary structure, interacts with 1-naphthylphthalamic acid (NPA), and FKBP42/TWD1. Phosphorylated by PHOT1 in phototropic seedlings, to modulates auxin export and distribution and regulates leaf and petiole curling. In terms of tissue distribution, ubiquitous, mostly in shoot meristems. Present in the majority of stem cells, predominantly in a non-polar manner. Accumulates in seedlings roots and hypocotyls, and in roots apices and inflorescences.

The protein localises to the cell membrane. It catalyses the reaction (indol-3-yl)acetate(in) + ATP + H2O = (indol-3-yl)acetate(out) + ADP + phosphate + H(+). The enzyme catalyses brassinolide(in) + ATP + H2O = brassinolide(out) + ADP + phosphate + H(+). It carries out the reaction 24-epi-brassinolide(in) + ATP + H2O = 24-epi-brassinolide(out) + ADP + phosphate + H(+). The catalysed reaction is 24-epi-castasterone(in) + ATP + H2O = 24-epi-castasterone(out) + ADP + phosphate + H(+). It catalyses the reaction castasterone(in) + ATP + H2O = castasterone(out) + ADP + phosphate + H(+). Transport capacity is stimulated by the chaperone protein FKBP42/TWD1. ATPase activity is specifically activated by bioactive brassinosteroids in a dose-dependent manner, including brassinolide (BL), 24-epiBL and 24-epicastasterone (24-epiCS). Inhibited by vanadate. Brassinosteroid exporter that, in conjunction with ABCB1, supports the accumulation of exogenous brassinosteroids (BR) in the apoplast, thus promoting BR signaling initiation involving the specific receptor BRI1 and required for plant growth and stress responses. Mediates the transport of castasterone (CSA) and brassinolide (BL) across the plasma membrane. Auxin efflux transporter that acts as a negative regulator of light signaling to promote hypocotyl elongation by mediating leaf tip to petiole auxin flux. Required for the regulation of leaf position and morphology during PHOT1-mediated blue light responses involving auxin distribution, especially in low light fluence. Together with ABCB1 and in a FKBP42/TWD1-dependent manner, supports seed development by promoting stamen elongation and, to a lesser extent, anther dehiscence and pollen maturation, probably as auxin transporters. Contributes to the connective auxin transport (CAT) that ensures communication across the shoot system, including auxin loading at axillary bud apices to influence strigolactone-mediated bud outgrowth responses and shoot branching control. Mediates the accumulation of chlorophyll and anthocyanin, as well as the expression of genes in response to light. Participates in auxin efflux and thus regulates the polar auxin basipetal transport (from auxin-producing leaves to auxin-sensitive tissues, and from root tips to root elongating zone). Involved in diverse auxin-mediated responses including gravitropism, phototropism and lateral root formation. Required for the regulation of organ bending, such as gravitropic root bending. This is ABC transporter B family member 19 from Arabidopsis thaliana (Mouse-ear cress).